Here is a 259-residue protein sequence, read N- to C-terminus: Isoprenyl transferase (259 aa).

Residue Asp33 is part of the active site. Mg(2+) is bound at residue Asp33. Residues 34-37 (GNRR), Trp38, His51, and 79-81 (STE) each bind substrate. Asn82 (proton acceptor) is an active-site residue. Substrate is bound by residues Arg86, Arg208, and 214 to 216 (RMS). Residue Glu227 participates in Mg(2+) binding.

This sequence belongs to the UPP synthase family. As to quaternary structure, homodimer. It depends on Mg(2+) as a cofactor.

Its function is as follows. Catalyzes the condensation of isopentenyl diphosphate (IPP) with allylic pyrophosphates generating different type of terpenoids. This chain is Isoprenyl transferase, found in Streptomyces fradiae (Streptomyces roseoflavus).